A 403-amino-acid chain; its full sequence is S-adenosylmethionine synthase (403 aa).

Histidine 17 is an ATP binding site. Residue aspartate 19 coordinates Mg(2+). Position 45 (glutamate 45) interacts with K(+). The L-methionine site is built by glutamate 58 and glutamine 104. The interval 104–114 (QSPDIAQGVDT) is flexible loop. ATP-binding positions include 179-181 (DGK), 250-251 (KF), aspartate 259, 265-266 (RK), alanine 282, and lysine 286. Residue aspartate 259 coordinates L-methionine. Lysine 290 provides a ligand contact to L-methionine.

The protein belongs to the AdoMet synthase family. In terms of assembly, homotetramer; dimer of dimers. Mg(2+) is required as a cofactor. The cofactor is K(+).

Its subcellular location is the cytoplasm. The catalysed reaction is L-methionine + ATP + H2O = S-adenosyl-L-methionine + phosphate + diphosphate. The protein operates within amino-acid biosynthesis; S-adenosyl-L-methionine biosynthesis; S-adenosyl-L-methionine from L-methionine: step 1/1. In terms of biological role, catalyzes the formation of S-adenosylmethionine (AdoMet) from methionine and ATP. The overall synthetic reaction is composed of two sequential steps, AdoMet formation and the subsequent tripolyphosphate hydrolysis which occurs prior to release of AdoMet from the enzyme. The protein is S-adenosylmethionine synthase of Mycobacterium bovis (strain BCG / Pasteur 1173P2).